We begin with the raw amino-acid sequence, 151 residues long: Probable cGMP 3',5'-cyclic phosphodiesterase subunit delta (151 aa).

This sequence belongs to the PDE6D/unc-119 family. As to quaternary structure, interacts with Pde6.

Its subcellular location is the nucleus. The protein resides in the cytoplasm. This chain is Probable cGMP 3',5'-cyclic phosphodiesterase subunit delta, found in Drosophila mojavensis (Fruit fly).